Here is a 260-residue protein sequence, read N- to C-terminus: Glucosamine-6-phosphate deaminase (260 aa).

Catalysis depends on aspartate 67, which acts as the Proton acceptor; for enolization step. Aspartate 136 (for ring-opening step) is an active-site residue. Histidine 138 (proton acceptor; for ring-opening step) is an active-site residue. Glutamate 143 functions as the For ring-opening step in the catalytic mechanism.

The protein belongs to the glucosamine/galactosamine-6-phosphate isomerase family. NagB subfamily.

The enzyme catalyses alpha-D-glucosamine 6-phosphate + H2O = beta-D-fructose 6-phosphate + NH4(+). It functions in the pathway amino-sugar metabolism; N-acetylneuraminate degradation; D-fructose 6-phosphate from N-acetylneuraminate: step 5/5. Its function is as follows. Catalyzes the reversible isomerization-deamination of glucosamine 6-phosphate (GlcN6P) to form fructose 6-phosphate (Fru6P) and ammonium ion. The chain is Glucosamine-6-phosphate deaminase from Arthrobacter sp. (strain FB24).